Reading from the N-terminus, the 323-residue chain is E3 ubiquitin-protein ligase SIRP1 (323 aa).

The RING-type; atypical zinc-finger motif lies at C199 to R240. Disordered regions lie at residues T248–N280 and R296–S323. Residues R259–A269 show a composition bias toward basic and acidic residues.

The protein localises to the cytoplasm. It carries out the reaction S-ubiquitinyl-[E2 ubiquitin-conjugating enzyme]-L-cysteine + [acceptor protein]-L-lysine = [E2 ubiquitin-conjugating enzyme]-L-cysteine + N(6)-ubiquitinyl-[acceptor protein]-L-lysine.. Its pathway is protein modification; protein ubiquitination. In terms of biological role, possesses E3 ubiqutin-protein ligase activity in vitro. Acts as negative regulator of salinity stress tolerance mediated by the ubiquitin-proteasome degradation pathway. This is E3 ubiquitin-protein ligase SIRP1 from Oryza sativa subsp. japonica (Rice).